Consider the following 601-residue polypeptide: Elongation factor 4 (601 aa).

The tr-type G domain maps to 5-187; the sequence is DKIRNFSIIA…SIVKDLPAPQ (183 aa). GTP-binding positions include 17 to 22 and 134 to 137; these read DHGKST and NKVD.

Belongs to the TRAFAC class translation factor GTPase superfamily. Classic translation factor GTPase family. LepA subfamily.

It is found in the cell inner membrane. It catalyses the reaction GTP + H2O = GDP + phosphate + H(+). Functionally, required for accurate and efficient protein synthesis under certain stress conditions. May act as a fidelity factor of the translation reaction, by catalyzing a one-codon backward translocation of tRNAs on improperly translocated ribosomes. Back-translocation proceeds from a post-translocation (POST) complex to a pre-translocation (PRE) complex, thus giving elongation factor G a second chance to translocate the tRNAs correctly. Binds to ribosomes in a GTP-dependent manner. The sequence is that of Elongation factor 4 from Maridesulfovibrio salexigens (strain ATCC 14822 / DSM 2638 / NCIMB 8403 / VKM B-1763) (Desulfovibrio salexigens).